A 121-amino-acid polypeptide reads, in one-letter code: MNAYTVSRLALDAGVSVHIVRDYLLRGLLRPVACTTGGYGLFDDAALQRLCFVRAAFEAGIGLGALARLCRALDAANCDETAAQLAVLRQFVERRREALANLEVQLAAMPTAPAQHAESLP.

The region spanning 3–72 (AYTVSRLALD…LGALARLCRA (70 aa)) is the HTH merR-type domain. Positions 6 to 25 (VSRLALDAGVSVHIVRDYLL) form a DNA-binding region, H-T-H motif.

The sequence is that of HTH-type transcriptional regulator MerD (merD) from Serratia marcescens.